We begin with the raw amino-acid sequence, 298 residues long: Protoheme IX farnesyltransferase (298 aa).

The next 8 helical transmembrane spans lie at 16 to 36, 45 to 65, 97 to 117, 141 to 161, 172 to 192, 223 to 243, 244 to 264, and 277 to 297; these read VVAL…PGMP, ALGF…NQLL, VLIV…TAVL, IVIG…AVTG, SLLV…LAIF, VLLA…VFYL, GGAV…LDPP, and VVYL…LPWV.

Belongs to the UbiA prenyltransferase family. Protoheme IX farnesyltransferase subfamily.

The protein localises to the cell inner membrane. The catalysed reaction is heme b + (2E,6E)-farnesyl diphosphate + H2O = Fe(II)-heme o + diphosphate. It functions in the pathway porphyrin-containing compound metabolism; heme O biosynthesis; heme O from protoheme: step 1/1. In terms of biological role, converts heme B (protoheme IX) to heme O by substitution of the vinyl group on carbon 2 of heme B porphyrin ring with a hydroxyethyl farnesyl side group. This chain is Protoheme IX farnesyltransferase, found in Xanthomonas campestris pv. campestris (strain 8004).